Here is a 359-residue protein sequence, read N- to C-terminus: Phospho-N-acetylmuramoyl-pentapeptide-transferase (359 aa).

The next 10 membrane-spanning stretches (helical) occupy residues 3–23 (QILI…PVLI), 55–75 (VAIL…GLAL), 84–104 (GLLV…DDLI), 120–140 (TVGI…FGNA), 156–176 (IATV…LVSA), 187–207 (LDGL…LITF), 231–251 (LALV…WNAA), 255–275 (IFMG…LSVT), 280–300 (ILAV…VVQI), and 334–354 (FWLL…GEWL).

The protein belongs to the glycosyltransferase 4 family. MraY subfamily. Mg(2+) serves as cofactor.

The protein resides in the cell membrane. It carries out the reaction UDP-N-acetyl-alpha-D-muramoyl-L-alanyl-gamma-D-glutamyl-meso-2,6-diaminopimeloyl-D-alanyl-D-alanine + di-trans,octa-cis-undecaprenyl phosphate = di-trans,octa-cis-undecaprenyl diphospho-N-acetyl-alpha-D-muramoyl-L-alanyl-D-glutamyl-meso-2,6-diaminopimeloyl-D-alanyl-D-alanine + UMP. It participates in cell wall biogenesis; peptidoglycan biosynthesis. Its function is as follows. Catalyzes the initial step of the lipid cycle reactions in the biosynthesis of the cell wall peptidoglycan: transfers peptidoglycan precursor phospho-MurNAc-pentapeptide from UDP-MurNAc-pentapeptide onto the lipid carrier undecaprenyl phosphate, yielding undecaprenyl-pyrophosphoryl-MurNAc-pentapeptide, known as lipid I. The protein is Phospho-N-acetylmuramoyl-pentapeptide-transferase of Mycobacterium sp. (strain JLS).